A 276-amino-acid polypeptide reads, in one-letter code: L-aminoadipate-semialdehyde dehydrogenase-phosphopantetheinyl transferase (276 aa).

This sequence belongs to the P-Pant transferase superfamily. AcpS family.

The catalysed reaction is apo-[ACP] + CoA = holo-[ACP] + adenosine 3',5'-bisphosphate + H(+). Catalyzes the transfer of a 4'-phosphopantetheine moiety from coenzyme A to a serine residue of acceptor proteins, such as alpha-aminoadipate reductase. Necessary for alpha-aminoadipate reductase activity. The chain is L-aminoadipate-semialdehyde dehydrogenase-phosphopantetheinyl transferase (LYS5) from Eremothecium gossypii (strain ATCC 10895 / CBS 109.51 / FGSC 9923 / NRRL Y-1056) (Yeast).